The following is a 308-amino-acid chain: Aspartate carbamoyltransferase catalytic subunit (308 aa).

2 residues coordinate carbamoyl phosphate: Arg-51 and Thr-52. Lys-80 is a binding site for L-aspartate. Positions 101, 129, and 132 each coordinate carbamoyl phosphate. Residues Arg-162 and Arg-224 each coordinate L-aspartate. The carbamoyl phosphate site is built by Leu-263 and Pro-264.

This sequence belongs to the aspartate/ornithine carbamoyltransferase superfamily. ATCase family. As to quaternary structure, heterododecamer (2C3:3R2) of six catalytic PyrB chains organized as two trimers (C3), and six regulatory PyrI chains organized as three dimers (R2).

It carries out the reaction carbamoyl phosphate + L-aspartate = N-carbamoyl-L-aspartate + phosphate + H(+). The protein operates within pyrimidine metabolism; UMP biosynthesis via de novo pathway; (S)-dihydroorotate from bicarbonate: step 2/3. Functionally, catalyzes the condensation of carbamoyl phosphate and aspartate to form carbamoyl aspartate and inorganic phosphate, the committed step in the de novo pyrimidine nucleotide biosynthesis pathway. This chain is Aspartate carbamoyltransferase catalytic subunit, found in Bacteroides fragilis (strain ATCC 25285 / DSM 2151 / CCUG 4856 / JCM 11019 / LMG 10263 / NCTC 9343 / Onslow / VPI 2553 / EN-2).